The sequence spans 486 residues: Galactose-1-phosphate uridylyltransferase (486 aa).

The protein belongs to the galactose-1-phosphate uridylyltransferase type 2 family.

It is found in the cytoplasm. The catalysed reaction is alpha-D-galactose 1-phosphate + UDP-alpha-D-glucose = alpha-D-glucose 1-phosphate + UDP-alpha-D-galactose. It functions in the pathway carbohydrate metabolism; galactose metabolism. The protein is Galactose-1-phosphate uridylyltransferase of Lacticaseibacillus casei (Lactobacillus casei).